The primary structure comprises 170 residues: Putative 4-hydroxy-4-methyl-2-oxoglutarate aldolase (170 aa).

Substrate-binding positions include 85–88 (GDMI) and Arg-107. An a divalent metal cation-binding site is contributed by Asp-108.

The protein belongs to the class II aldolase/RraA-like family. As to quaternary structure, homotrimer. Requires a divalent metal cation as cofactor.

It carries out the reaction 4-hydroxy-4-methyl-2-oxoglutarate = 2 pyruvate. The catalysed reaction is oxaloacetate + H(+) = pyruvate + CO2. Catalyzes the aldol cleavage of 4-hydroxy-4-methyl-2-oxoglutarate (HMG) into 2 molecules of pyruvate. Also contains a secondary oxaloacetate (OAA) decarboxylase activity due to the common pyruvate enolate transition state formed following C-C bond cleavage in the retro-aldol and decarboxylation reactions. The sequence is that of Putative 4-hydroxy-4-methyl-2-oxoglutarate aldolase from Acinetobacter baylyi (strain ATCC 33305 / BD413 / ADP1).